Reading from the N-terminus, the 144-residue chain is Large ribosomal subunit protein uL16 (144 aa).

Residues 1 to 16 show a composition bias toward basic residues; the sequence is MLVPKRVKHRKVQRGK. A disordered region spans residues 1–20; it reads MLVPKRVKHRKVQRGKMRGE.

It belongs to the universal ribosomal protein uL16 family. Part of the 50S ribosomal subunit.

In terms of biological role, binds 23S rRNA and is also seen to make contacts with the A and possibly P site tRNAs. This chain is Large ribosomal subunit protein uL16, found in Limosilactobacillus fermentum (strain NBRC 3956 / LMG 18251) (Lactobacillus fermentum).